A 62-amino-acid polypeptide reads, in one-letter code: uncharacterized protein (62 aa).

This is an uncharacterized protein from Solanum tuberosum (Potato).